The chain runs to 414 residues: D-mannose isomerase (414 aa).

Catalysis depends on proton donor/acceptor residues His255 and His390.

This sequence belongs to the N-acylglucosamine 2-epimerase family. As to quaternary structure, monomer.

It carries out the reaction D-mannose = D-fructose. Strongly inhibited by Ag(2+), Cu(2+) and cetyltrimethyl ammonium bromide (CTAB). Its function is as follows. Catalyzes the reversible isomerization of D-mannose to D-fructose. Shows high specific activity towards mannose and fructose, and has no detectable activity towards other monosaccharides and disaccharides. The protein is D-mannose isomerase of Pseudomonas cannabina pv. alisalensis.